Consider the following 320-residue polypeptide: (+)-corvol ether B synthase/(+)-corvol ether A synthase ((2E,6E)-farnesyl diphosphate cyclizing) (320 aa).

D78 and D83 together coordinate Mg(2+). The DDXXXD motif signature appears at D78–D83. R171 is a substrate binding site. Mg(2+) is bound by residues N217, S221, and E225.

It belongs to the terpene synthase family. Mg(2+) serves as cofactor.

It catalyses the reaction (2E,6E)-farnesyl diphosphate + H2O = (+)-corvol ether B + diphosphate. The catalysed reaction is (2E,6E)-farnesyl diphosphate + H2O = (+)-corvol ether A + diphosphate. The protein operates within secondary metabolite biosynthesis; terpenoid biosynthesis. Functionally, catalyzes the conversion of (2E,6E)-farnesyl diphosphate (FPP) into (+)-corvol ether A and (+)-corvol ether B via a 1,10-cyclization, which requires isomerization of FPP to nerolidyl diphosphate (NPP) and then abstraction of the pyrophosphate from intermediate NPP leading to a (E,Z)-germacradienyl (helminthogermacradienyl) cation. The preferred substrate is (2E,6E)-farnesyl diphosphate (FPP), however geranyl diphosphate (GPP) is also able to produce small amounts of several acyclic and cyclic monoterpenes, with linalool as the main product. The protein is (+)-corvol ether B synthase/(+)-corvol ether A synthase ((2E,6E)-farnesyl diphosphate cyclizing) of Kitasatospora setae (strain ATCC 33774 / DSM 43861 / JCM 3304 / KCC A-0304 / NBRC 14216 / KM-6054) (Streptomyces setae).